The following is a 289-amino-acid chain: Protein SET (289 aa).

Positions 1 to 45 are disordered; sequence MAPKRQSAILPQPKKPRPAAAPKLEDKSASPGLPKGEKEQQEAIE. Residue alanine 2 is modified to N,N,N-trimethylalanine; by NTM1. The residue at position 7 (serine 7) is a Phosphoserine. Residue proline 11 is modified to N6-acetyllysine. A Phosphoserine modification is found at lysine 15. Position 23 is an N6-acetyllysine (lysine 23). Lysine 23 bears the Phosphothreonine mark. Serine 28 carries the phosphoserine modification. Residues 31-77 are dimerization; the sequence is PGLPKGEKEQQEAIEHIDEVQNEIDRLNEQASEEILKVEQKYNKLRQ. Positions 35–45 are enriched in basic and acidic residues; the sequence is KGEKEQQEAIE. Serine 62 carries the post-translational modification Phosphoserine. At lysine 67 the chain carries N6-acetyllysine. An earmuff domain region spans residues 78 to 224; that stretch reads PFFQKRSELI…ELGEVIKDDI (147 aa). Tyrosine 145 is modified (phosphotyrosine). Lysine 149 carries the N6-acetyllysine modification. Lysine 153 is covalently cross-linked (Glycyl lysine isopeptide (Lys-Gly) (interchain with G-Cter in ubiquitin)). 2 disordered regions span residues 157–206 and 235–289; these read LNES…TWFT and PDMD…GEDD. Basic and acidic residues predominate over residues 168–180; that stretch reads TEIKWKSGKDLTK. N6-acetyllysine is present on lysine 171. Over residues 236–289 the composition is skewed to acidic residues; sequence DMDDEEGEAEDDDDDDEEEEGLEDIDEEGDEDEGEEDDDEDEGEEGEEDEGEDD.

Belongs to the nucleosome assembly protein (NAP) family. In terms of assembly, headphone-shaped homodimer. Isoform 1 and isoform 2 interact directly with each other and with ANP32A within the tripartite INHAT (inhibitor of acetyltransferases) complex. Isoform 1 and isoform 2 interact also with histones. Isoform 2 is a omponent of the SET complex, composed of at least ANP32A, APEX1, HMGB2, NME1, SET and TREX1, but not NME2 or TREX2. Within this complex, directly interacts with ANP32A, NME1, HMGB2 and TREX1; the interaction with ANP32A is enhanced after cleavage. Interacts with APBB1, CHTOP, SETBP1, SGO1. Post-translationally, some glutamate residues are glycylated by TTLL8. This modification occurs exclusively on glutamate residues and results in a glycine chain on the gamma-carboxyl group. In terms of processing, N-terminus of isoform 1 is methylated by METTL11A/NTM1. Mainly trimethylated. Cleaved after Lys-176 by GZMA. The cleavage inhibits its nucleosome assembly activity and disrupts the inhibition on NME1.

The protein resides in the cytoplasm. It localises to the cytosol. Its subcellular location is the endoplasmic reticulum. It is found in the nucleus. The protein localises to the nucleoplasm. Functionally, multitasking protein, involved in apoptosis, transcription, nucleosome assembly and histone chaperoning. Isoform 2 anti-apoptotic activity is mediated by inhibition of the GZMA-activated DNase, NME1. In the course of cytotoxic T-lymphocyte (CTL)-induced apoptosis, GZMA cleaves SET, disrupting its binding to NME1 and releasing NME1 inhibition. Isoform 1 and isoform 2 are potent inhibitors of protein phosphatase 2A. Isoform 1 and isoform 2 inhibit EP300/CREBBP and PCAF-mediated acetylation of histones (HAT) and nucleosomes, most probably by masking the accessibility of lysines of histones to the acetylases. The predominant target for inhibition is histone H4. HAT inhibition leads to silencing of HAT-dependent transcription and prevents active demethylation of DNA. Both isoforms stimulate DNA replication of the adenovirus genome complexed with viral core proteins; however, isoform 2 specific activity is higher. This Mus musculus (Mouse) protein is Protein SET (Set).